An 86-amino-acid polypeptide reads, in one-letter code: UPF0457 protein SSP0714 (86 aa).

This sequence belongs to the UPF0457 family.

The chain is UPF0457 protein SSP0714 from Staphylococcus saprophyticus subsp. saprophyticus (strain ATCC 15305 / DSM 20229 / NCIMB 8711 / NCTC 7292 / S-41).